A 308-amino-acid chain; its full sequence is HTH-type transcriptional activator AllS (308 aa).

The HTH lysR-type domain maps to 2–59 (FDPETLRTFIAVAETGSFSKAAERLCKTTATISYRIKLLEENTGVALFFRTTRSVTLT). The H-T-H motif DNA-binding region spans 19–38 (FSKAAERLCKTTATISYRIK).

Belongs to the LysR transcriptional regulatory family.

In terms of biological role, positive regulator essential for the expression of allD operon. Binds to the allD promoter. The chain is HTH-type transcriptional activator AllS (allS) from Escherichia coli O6:K15:H31 (strain 536 / UPEC).